The following is a 787-amino-acid chain: Protein translocase subunit SecA (787 aa).

Residues Gln85, 103 to 107 (GEGKT), and Asp492 each bind ATP.

The protein belongs to the SecA family. Monomer and homodimer. Part of the essential Sec protein translocation apparatus which comprises SecA, SecYEG and auxiliary proteins SecDF. Other proteins may also be involved.

The protein resides in the cell membrane. It is found in the cytoplasm. It catalyses the reaction ATP + H2O + cellular proteinSide 1 = ADP + phosphate + cellular proteinSide 2.. In terms of biological role, part of the Sec protein translocase complex. Interacts with the SecYEG preprotein conducting channel. Has a central role in coupling the hydrolysis of ATP to the transfer of proteins into and across the cell membrane, serving as an ATP-driven molecular motor driving the stepwise translocation of polypeptide chains across the membrane. This chain is Protein translocase subunit SecA, found in Latilactobacillus sakei subsp. sakei (strain 23K) (Lactobacillus sakei subsp. sakei).